A 500-amino-acid polypeptide reads, in one-letter code: MCADLLPPATVRGMEQLDRDAFAKTVRVPHLIIPEATNLNSAARALKQYLLKMEHYKPIRSEERKITLHPIPVKQWEDLPVEPLKELGIEKDCLVWEEIKLSYENYKYDLILKAVLPENQEGLSAFSKIGHIIHLNLKNHLMPYRRLIGEVLMDKVADCRTVVNKSNSIQNTYRNFEMELICGVPEYEVSIKENGCTYKFNFSRVYWNPRLSTEHQKITDMLEEGDLLYDLYAGVGPFTVPAAKRGCTVIANDLNPDSYSALVINCGLNKVMRNVKCYNMDAVDFIKVELRNDLLAKLADDKFQGNIHITMNLPAMAVEHLVHFPGLFSGESIELRIKPLVHVYCFAQGADDKKPIAQQKVEQWLGVEVTDMLKEITFVRNVAPNKDMMRVRNPSALGMAKKANKLKDQPKQLAKKAKNVFAVSQTKKGNLKKTKEVAAKLKKINVQDKREKVDANFKTLHAQIVAKKTPKPAPRPLPAKNKTTPDTNKMETDLTKLEMK.

S-adenosyl-L-methionine is bound by residues H215, 253–254 (DL), 281–282 (DA), and N312. The segment at 463 to 500 (QIVAKKTPKPAPRPLPAKNKTTPDTNKMETDLTKLEMK) is disordered. Residues 488-500 (NKMETDLTKLEMK) show a composition bias toward basic and acidic residues.

Belongs to the class I-like SAM-binding methyltransferase superfamily. TRM5/TYW2 family. Monomer.

It is found in the mitochondrion matrix. The protein resides in the nucleus. Its subcellular location is the cytoplasm. It carries out the reaction guanosine(37) in tRNA + S-adenosyl-L-methionine = N(1)-methylguanosine(37) in tRNA + S-adenosyl-L-homocysteine + H(+). In terms of biological role, specifically methylates the N1 position of guanosine-37 in various cytoplasmic and mitochondrial tRNAs. Methylation is not dependent on the nature of the nucleoside 5' of the target nucleoside. This is the first step in the biosynthesis of wybutosine (yW), a modified base adjacent to the anticodon of tRNAs and required for accurate decoding. The chain is tRNA (guanine(37)-N(1))-methyltransferase from Anopheles darlingi (Mosquito).